The primary structure comprises 624 residues: Glucoamylase (624 aa).

The signal sequence occupies residues Met1 to Ser18. The CBM21 domain maps to Asn26–Glu132. Asn54, Asn70, Asn98, Asn111, Asn168, Asn267, and Asn333 each carry an N-linked (GlcNAc...) asparagine glycan. The active-site Proton acceptor is Asp340. The active-site Proton donor is the Glu343. N-linked (GlcNAc...) asparagine glycans are attached at residues Asn460 and Asn582.

The protein belongs to the glycosyl hydrolase 15 family.

The enzyme catalyses Hydrolysis of terminal (1-&gt;4)-linked alpha-D-glucose residues successively from non-reducing ends of the chains with release of beta-D-glucose.. In Blastobotrys adeninivorans (Yeast), this protein is Glucoamylase (GAA).